Reading from the N-terminus, the 191-residue chain is RNA polymerase sigma factor CnrH (191 aa).

Residues 49–62 (DVVQDTFVAAWHAL) carry the Polymerase core binding motif. The segment at residues 156–175 (QPEAAAVLGLSVKAVEGRIG) is a DNA-binding region (H-T-H motif).

The protein belongs to the sigma-70 factor family. ECF subfamily.

Its function is as follows. Sigma factors are initiation factors that promote the attachment of RNA polymerase to specific initiation sites and are then released. This sigma factor regulates the genes for a membrane-located efflux system that confers resistance to nickel and cobalt. Functionally, cnrH alone is able to activate CNR expression, while both CnrY and CrnX are needed for nickel induction of cnrH. Binds DNA in an RNA polymerase-dependent fashion. CnrH may be controlled by a CnrYX transmembrane anti-sigma factor complex which binds CnrH in the absence of Ni(2+). If Ni(2+) appears in the periplasm, it may be bound by CnrR (CnrX); the signal then would be transmitted by CnrY into the cytoplasm and CnrH would be released. The sequence is that of RNA polymerase sigma factor CnrH (cnrH) from Cupriavidus metallidurans (strain ATCC 43123 / DSM 2839 / NBRC 102507 / CH34) (Ralstonia metallidurans).